The primary structure comprises 481 residues: Aspartyl/glutamyl-tRNA(Asn/Gln) amidotransferase subunit B (481 aa).

It belongs to the GatB/GatE family. GatB subfamily. As to quaternary structure, heterotrimer of A, B and C subunits.

The enzyme catalyses L-glutamyl-tRNA(Gln) + L-glutamine + ATP + H2O = L-glutaminyl-tRNA(Gln) + L-glutamate + ADP + phosphate + H(+). The catalysed reaction is L-aspartyl-tRNA(Asn) + L-glutamine + ATP + H2O = L-asparaginyl-tRNA(Asn) + L-glutamate + ADP + phosphate + 2 H(+). Allows the formation of correctly charged Asn-tRNA(Asn) or Gln-tRNA(Gln) through the transamidation of misacylated Asp-tRNA(Asn) or Glu-tRNA(Gln) in organisms which lack either or both of asparaginyl-tRNA or glutaminyl-tRNA synthetases. The reaction takes place in the presence of glutamine and ATP through an activated phospho-Asp-tRNA(Asn) or phospho-Glu-tRNA(Gln). This chain is Aspartyl/glutamyl-tRNA(Asn/Gln) amidotransferase subunit B, found in Prosthecochloris aestuarii (strain DSM 271 / SK 413).